Here is a 431-residue protein sequence, read N- to C-terminus: Glutamate-1-semialdehyde 2,1-aminomutase (431 aa).

At Lys269 the chain carries N6-(pyridoxal phosphate)lysine.

The protein belongs to the class-III pyridoxal-phosphate-dependent aminotransferase family. HemL subfamily. Homodimer. It depends on pyridoxal 5'-phosphate as a cofactor.

The protein localises to the cytoplasm. It carries out the reaction (S)-4-amino-5-oxopentanoate = 5-aminolevulinate. Its pathway is porphyrin-containing compound metabolism; protoporphyrin-IX biosynthesis; 5-aminolevulinate from L-glutamyl-tRNA(Glu): step 2/2. This is Glutamate-1-semialdehyde 2,1-aminomutase from Francisella tularensis subsp. holarctica (strain LVS).